The sequence spans 126 residues: MPYSKITVPVLVGEGLTEWDVIDVMRETHPPTVEDQYHYHTFDSMQNRTIFVLENPLYPDVDKIPEKVLGIAVDALEDMLDNVPVEDLPVTEEQGNVKRFTTKLASIVFDVFLIIPDFVSVTAKEE.

The chain is Putative gene 48 protein (48) from Bacillus phage SP01 (Bacteriophage SP01).